A 548-amino-acid polypeptide reads, in one-letter code: uncharacterized protein (548 aa).

The region spanning 8–200 (KLFADMIIQG…LLCVYEGFLK (193 aa)) is the DhaL domain.

This is an uncharacterized protein from Staphylococcus aureus (strain NCTC 8325 / PS 47).